Here is a 352-residue protein sequence, read N- to C-terminus: Selenide, water dikinase (352 aa).

Cys-23 is an active-site residue. ATP-binding positions include Lys-26 and 54-56 (SRD). Asp-57 is a Mg(2+) binding site. ATP-binding positions include Asp-74, Asp-97, and 145–147 (GHS). Asp-97 lines the Mg(2+) pocket. Position 233 (Asp-233) interacts with Mg(2+).

The protein belongs to the selenophosphate synthase 1 family. Class I subfamily. Homodimer. Mg(2+) is required as a cofactor.

The enzyme catalyses hydrogenselenide + ATP + H2O = selenophosphate + AMP + phosphate + 2 H(+). Synthesizes selenophosphate from selenide and ATP. The chain is Selenide, water dikinase from Shewanella sp. (strain ANA-3).